The primary structure comprises 365 residues: Putative 2-dehydropantoate 2-reductase (365 aa).

This sequence belongs to the ketopantoate reductase family.

The catalysed reaction is (R)-pantoate + NADP(+) = 2-dehydropantoate + NADPH + H(+). Its pathway is cofactor biosynthesis; (R)-pantothenate biosynthesis; (R)-pantoate from 3-methyl-2-oxobutanoate: step 2/2. In terms of biological role, catalyzes the NADPH-dependent reduction of ketopantoate into pantoic acid. In Arabidopsis thaliana (Mouse-ear cress), this protein is Putative 2-dehydropantoate 2-reductase (KPR).